We begin with the raw amino-acid sequence, 498 residues long: Succinate-semialdehyde dehydrogenase [NADP(+)] 1 (498 aa).

247–252 (GSTNVG) provides a ligand contact to NAD(+). Active-site residues include glutamate 269 and cysteine 303.

The protein belongs to the aldehyde dehydrogenase family. As to quaternary structure, homotetramer.

It localises to the cytoplasm. The catalysed reaction is succinate semialdehyde + NAD(+) + H2O = succinate + NADH + 2 H(+). It catalyses the reaction succinate semialdehyde + NADP(+) + H2O = succinate + NADPH + 2 H(+). The protein operates within amino-acid degradation; 4-aminobutanoate degradation. Catalyzes the oxidation of succinate semialdehyde to succinate. Can utilize both NAD(+) or NADP(+) as a coenzyme. Functions in a gamma-aminobutyrate (GABA) degradation pathway that allows growth utilizing GABA as a nitrogen source. Functions in the GABA shunt, which allows to bypass 2 reactions in the TCA cycle by removing alpha-ketoglutarate from the cycle and feeding succinate and NADH back into the cycle. In Schizosaccharomyces pombe (strain 972 / ATCC 24843) (Fission yeast), this protein is Succinate-semialdehyde dehydrogenase [NADP(+)] 1 (ssd1).